Consider the following 268-residue polypeptide: Small ribosomal subunit protein uS2 (268 aa).

Positions 161–179 are laminin-binding; that stretch reads IPCNNDKYSIALMLWMLAR.

The protein belongs to the universal ribosomal protein uS2 family. In terms of assembly, component of the small ribosomal subunit. Mature ribosomes consist of a small (40S) and a large (60S) subunit. The 40S subunit contains about 33 different proteins and 1 molecule of RNA (18S). The 60S subunit contains about 49 different proteins and 3 molecules of RNA (28S, 5.8S and 5S). Interacts with ribosomal protein S21.

The protein resides in the cytoplasm. Its function is as follows. Required for the assembly and/or stability of the 40S ribosomal subunit. Required for the processing of the 20S rRNA-precursor to mature 18S rRNA in a late step of the maturation of 40S ribosomal subunits. Binds laminin. The protein is Small ribosomal subunit protein uS2 (egmo3) of Echinococcus granulosus (Hydatid tapeworm).